The following is a 191-amino-acid chain: Calcium-activated potassium channel subunit beta-1 (191 aa).

At 1 to 15 (MGKKLVMAQKRGETR) the chain is on the cytoplasmic side. A helical transmembrane segment spans residues 16 to 36 (ALCLGVAMVMCAVITYYILGT). Residues 37-157 (TMLPLYQKSV…YQRLYGPQAL (121 aa)) lie on the Extracellular side of the membrane. 2 N-linked (GlcNAc...) asparagine glycosylation sites follow: Asn-80 and Asn-142. A helical transmembrane segment spans residues 158 to 178 (LASLFWPTFLLTGGLLIIAMV). Over 179 to 191 (KINRSLSILAAQK) the chain is Cytoplasmic.

This sequence belongs to the KCNMB (TC 8.A.14.1) family. KCNMB1 subfamily. As to quaternary structure, interacts with KCNMA1 tetramer. There are probably 4 molecules of KCMNB1 per KCNMA1 tetramer. In terms of processing, N-glycosylated.

The protein localises to the membrane. Its function is as follows. Regulatory subunit of the calcium activated potassium KCNMA1 (maxiK) channel. Modulates the calcium sensitivity and gating kinetics of KCNMA1, thereby contributing to KCNMA1 channel diversity. Increases the apparent Ca(2+)/voltage sensitivity of the KCNMA1 channel. It also modifies KCNMA1 channel kinetics and alters its pharmacological properties. It slows down the activation and the deactivation kinetics of the channel. Acts as a negative regulator of smooth muscle contraction by enhancing the calcium sensitivity to KCNMA1. Its presence is also a requirement for internal binding of the KCNMA1 channel opener dehydrosoyasaponin I (DHS-1) triterpene glycoside and for external binding of the agonist hormone 17-beta-estradiol (E2). Increases the binding activity of charybdotoxin (CTX) toxin to KCNMA1 peptide blocker by increasing the CTX association rate and decreasing the dissociation rate. The polypeptide is Calcium-activated potassium channel subunit beta-1 (KCNMB1) (Oryctolagus cuniculus (Rabbit)).